The sequence spans 566 residues: KsdD-like steroid dehydrogenase MT0809 (566 aa).

23–54 lines the FAD pocket; that stretch reads DAIVVGAGLAGLVAACELADRGLRVLILDQEN.

It belongs to the FAD-dependent oxidoreductase 2 family. FAD serves as cofactor.

Its pathway is lipid metabolism; steroid biosynthesis. Able to catalyze the elimination of the C-1 and C-2 hydrogen atoms of the A-ring from the polycyclic ring structure of 3-ketosteroids. In Mycobacterium tuberculosis (strain CDC 1551 / Oshkosh), this protein is KsdD-like steroid dehydrogenase MT0809.